A 515-amino-acid polypeptide reads, in one-letter code: Tetratricopeptide repeat protein 8 (515 aa).

Residues 4-37 form a TPR 1 repeat; it reads EMEPLLRAWSYFRRRKFQLCADLCTQMLEKSPYD. 2 disordered regions span residues 89–109 and 118–137; these read RPGTSLKLPGTNQTGGPTQAV and PITGFLRPSTQSGRPGTMEQ. 7 TPR repeats span residues 225–258, 259–291, 292–325, 326–359, 360–393, 397–430, and 432–464; these read WWWKVQIGKCYYRLGMYREAEKQFKSALKQQEMV, DTFLYLAKVYIILDQPVTALNLFKQGLDKFPGE, VTLLCGIARIYEEMNNSSSAAEYYKEVLKQDNTH, VEAIACIGSNHFYSDQPEVALRFYRRLLQMGVYN, CQLFNNLGLCCFYAQQYDMTLTSFERALSLAENE, ADVWYNLGHIAVGIGDTNLAHQCFRLALVHNNHH, and EAYNNLAVLEMRKGHVEQARALLQTASSLAPHM.

As to quaternary structure, part of BBSome complex, that contains BBS1, BBS2, BBS4, BBS5, BBS7, BBS8/TTC8, BBS9 and BBIP10. Interacts with PCM1. Interacts with CCDC28B. Interacts with PKD1. As to expression, isoform 1 is retina-specific whereas isoform 2 is ubiquitously expressed.

Its subcellular location is the cytoplasm. The protein resides in the cytoskeleton. It localises to the microtubule organizing center. It is found in the centrosome. The protein localises to the centriole. Its subcellular location is the cell projection. The protein resides in the cilium membrane. It localises to the centriolar satellite. It is found in the cilium. In terms of biological role, the BBSome complex is thought to function as a coat complex required for sorting of specific membrane proteins to the primary cilia. The BBSome complex is required for ciliogenesis but is dispensable for centriolar satellite function. This ciliogenic function is mediated in part by the Rab8 GDP/GTP exchange factor, which localizes to the basal body and contacts the BBSome. Rab8(GTP) enters the primary cilium and promotes extension of the ciliary membrane. Firstly the BBSome associates with the ciliary membrane and binds to RAB3IP/Rabin8, the guanosyl exchange factor (GEF) for Rab8 and then the Rab8-GTP localizes to the cilium and promotes docking and fusion of carrier vesicles to the base of the ciliary membrane. The BBSome complex, together with the LTZL1, controls SMO ciliary trafficking and contributes to the sonic hedgehog (SHH) pathway regulation. Required for proper BBSome complex assembly and its ciliary localization. This Mus musculus (Mouse) protein is Tetratricopeptide repeat protein 8 (Ttc8).